We begin with the raw amino-acid sequence, 334 residues long: Antho-RFamide neuropeptides (334 aa).

A signal peptide spans Met-1–Ala-26. A propeptide spanning residues Lys-27–Glu-116 is cleaved from the precursor. Composition is skewed to basic and acidic residues over residues Arg-115–Leu-289 and Pro-303–Ser-334. The segment at Arg-115 to Ser-334 is disordered. Phe-120 carries the phenylalanine amide modification. A propeptide spanning residues Arg-122–Asp-125 is cleaved from the precursor. The residue at position 129 (Phe-129) is a Phenylalanine amide. A propeptide spanning residues Arg-131–Asp-134 is cleaved from the precursor. At Phe-138 the chain carries Phenylalanine amide. Positions Arg-140–Glu-142 are excised as a propeptide. Phe-146 is modified (phenylalanine amide). The propeptide occupies Arg-148 to Asp-151. Phenylalanine amide is present on Phe-155. Positions Arg-157–Asp-160 are excised as a propeptide. Position 164 is a phenylalanine amide (Phe-164). A propeptide spanning residues Arg-166 to Asp-169 is cleaved from the precursor. Position 173 is a phenylalanine amide (Phe-173). Residues Arg-175 to Glu-178 constitute a propeptide that is removed on maturation. Phe-182 bears the Phenylalanine amide mark. Positions Arg-184–Asp-187 are excised as a propeptide. The residue at position 191 (Phe-191) is a Phenylalanine amide. Residues Arg-193–Glu-196 constitute a propeptide that is removed on maturation. Phenylalanine amide is present on Phe-200. A propeptide spanning residues Arg-202–Asp-205 is cleaved from the precursor. Position 209 is a phenylalanine amide (Phe-209). A propeptide spanning residues Arg-211–Asp-214 is cleaved from the precursor. Phe-218 carries the phenylalanine amide modification. Residues Arg-220–Glu-223 constitute a propeptide that is removed on maturation. Position 227 is a phenylalanine amide (Phe-227). Residues Lys-229–Asp-233 constitute a propeptide that is removed on maturation. Residue Phe-237 is modified to Phenylalanine amide. Residues Lys-239–Asp-242 constitute a propeptide that is removed on maturation. Phe-246 carries the post-translational modification Phenylalanine amide. The propeptide occupies Lys-248–Asp-252. Residue Phe-256 is modified to Phenylalanine amide. Positions Lys-258–Asp-262 are excised as a propeptide. Phe-266 bears the Phenylalanine amide mark. Positions Lys-268–Asp-271 are excised as a propeptide. Phe-275 is subject to Phenylalanine amide. Positions Lys-277–Asp-280 are excised as a propeptide. At Phe-284 the chain carries Phenylalanine amide. A propeptide spanning residues Arg-286–Ser-334 is cleaved from the precursor.

It belongs to the FARP (FMRFamide related peptide) family. In terms of tissue distribution, neurons associated with smooth muscle fibers.

It localises to the secreted. Functionally, not known but it could act as a transmitter at neuromuscular synapses. The sequence is that of Antho-RFamide neuropeptides from Calliactis parasitica (Sea anemone).